Reading from the N-terminus, the 390-residue chain is MGTPLKSNSFRVLFCGSGELGKEVVIELQRFGVEVIAIDRYADAPAMQVAHRSHVVDMLDPVALRSVIEKERPNLIVPEIEAIATPELVKLEQEGYRVIPSARAVNLTMNREGIRRLAAEELGLPTSPYRFAGTREEYLQAVAEVGLPLVVKPVMSSSGKGQSTVKTEADIERAWEYAQTGGRAGKGRVIVEGFVDFDYEITLLTVRHKEGITFCEPIGHRQEDGDYRESWQPQPMNDLALQRSKEIARAVVEDLGGYGIYGVELFVKGENVWFSEVSPRPHDTGLVTLVSQDLSEFAIHARAILGIPVPVVRQNGPSASAVILPEGSSTEVSYTGLEEALAQPGTQLRLFGKPELQGRRRMGVALALGSSIEDAREKARTAASSIKVQF.

N(1)-(5-phospho-beta-D-ribosyl)glycinamide-binding positions include E19–L20 and E79. Residues R111, K152, S157–Q162, E192–V195, and E200 each bind ATP. One can recognise an ATP-grasp domain in the interval R116–L305. Mg(2+) contacts are provided by E264 and E276. N(1)-(5-phospho-beta-D-ribosyl)glycinamide-binding positions include D283, K353, and R360–R361.

It belongs to the PurK/PurT family. In terms of assembly, homodimer.

It catalyses the reaction N(1)-(5-phospho-beta-D-ribosyl)glycinamide + formate + ATP = N(2)-formyl-N(1)-(5-phospho-beta-D-ribosyl)glycinamide + ADP + phosphate + H(+). It participates in purine metabolism; IMP biosynthesis via de novo pathway; N(2)-formyl-N(1)-(5-phospho-D-ribosyl)glycinamide from N(1)-(5-phospho-D-ribosyl)glycinamide (formate route): step 1/1. Involved in the de novo purine biosynthesis. Catalyzes the transfer of formate to 5-phospho-ribosyl-glycinamide (GAR), producing 5-phospho-ribosyl-N-formylglycinamide (FGAR). Formate is provided by PurU via hydrolysis of 10-formyl-tetrahydrofolate. In Marinobacter nauticus (strain ATCC 700491 / DSM 11845 / VT8) (Marinobacter aquaeolei), this protein is Formate-dependent phosphoribosylglycinamide formyltransferase.